Reading from the N-terminus, the 165-residue chain is Ribosome maturation factor RimM (165 aa).

Residues 90–161 enclose the PRC barrel domain; it reads PDTYYVSDLK…KIIIKPVGEW (72 aa).

Belongs to the RimM family. Binds ribosomal protein uS19.

It is found in the cytoplasm. Functionally, an accessory protein needed during the final step in the assembly of 30S ribosomal subunit, possibly for assembly of the head region. Essential for efficient processing of 16S rRNA. May be needed both before and after RbfA during the maturation of 16S rRNA. It has affinity for free ribosomal 30S subunits but not for 70S ribosomes. This chain is Ribosome maturation factor RimM, found in Clostridium beijerinckii (strain ATCC 51743 / NCIMB 8052) (Clostridium acetobutylicum).